A 511-amino-acid polypeptide reads, in one-letter code: 2-isopropylmalate synthase (511 aa).

A Pyruvate carboxyltransferase domain is found at 5-267 (LFIFDTTLRD…DTRIDATQIV (263 aa)). Mn(2+)-binding residues include aspartate 14, histidine 202, histidine 204, and asparagine 238. Residues 393-511 (KLLSMKVCSE…SKRERAHPQV (119 aa)) are regulatory domain.

The protein belongs to the alpha-IPM synthase/homocitrate synthase family. LeuA type 1 subfamily. As to quaternary structure, homodimer. It depends on Mn(2+) as a cofactor.

Its subcellular location is the cytoplasm. It carries out the reaction 3-methyl-2-oxobutanoate + acetyl-CoA + H2O = (2S)-2-isopropylmalate + CoA + H(+). Its pathway is amino-acid biosynthesis; L-leucine biosynthesis; L-leucine from 3-methyl-2-oxobutanoate: step 1/4. Functionally, catalyzes the condensation of the acetyl group of acetyl-CoA with 3-methyl-2-oxobutanoate (2-ketoisovalerate) to form 3-carboxy-3-hydroxy-4-methylpentanoate (2-isopropylmalate). This chain is 2-isopropylmalate synthase, found in Thiobacillus denitrificans (strain ATCC 25259 / T1).